A 547-amino-acid chain; its full sequence is MAELTISSDEIRSAIDNYTASYSPEASREEVGTVTDTSDGIAHVSGLPSAMSNELLEFPGGIVGVALNLDATEIGAVILGDYQNIQEGQEVKRTGDVLSVPVGDAFLGRVIDPLGAPIDGLGEIESTENRALELQAASVLERQPVEEPLQTGIKAIDAMTPIGRGQRQLIIGDRKTGKTAVCIDAILNQKANWDSGDVNKQVRCIYVAIGQKGSTIAGVKAALEEKGAMEYTTIVAAPASDSAGFKWLAPYTGSAIGQHWMYQGKHVLVVFDDLTKQAEAYRAISLLLRRPPGREAYPGDVFYLHSRLLERSAKLSDALGGGSLTALPIIETKANDVSAYIPTNVISITDGQVFLESDLFNKGVRPAINVGISVSRVGGAAQTKGMKKVSGSLRLELAQFRELEAFSAFASDLDAASKAQLERGARLVELLKQDQYSPIPVEDQIVSIYLAGEGIFDSVPIGDVRRFEKELLEDLKHSAAGVYSSINGGKALDADNAAALIAATNKFKEGFIASDGSRVVNEAEADALGADEVENEQINVKRKTVSK.

172-179 (GDRKTGKT) is a binding site for ATP.

It belongs to the ATPase alpha/beta chains family. In terms of assembly, F-type ATPases have 2 components, CF(1) - the catalytic core - and CF(0) - the membrane proton channel. CF(1) has five subunits: alpha(3), beta(3), gamma(1), delta(1), epsilon(1). CF(0) has three main subunits: a(1), b(2) and c(9-12). The alpha and beta chains form an alternating ring which encloses part of the gamma chain. CF(1) is attached to CF(0) by a central stalk formed by the gamma and epsilon chains, while a peripheral stalk is formed by the delta and b chains.

It is found in the cell membrane. It carries out the reaction ATP + H2O + 4 H(+)(in) = ADP + phosphate + 5 H(+)(out). In terms of biological role, produces ATP from ADP in the presence of a proton gradient across the membrane. The alpha chain is a regulatory subunit. This Rhodococcus erythropolis (strain PR4 / NBRC 100887) protein is ATP synthase subunit alpha.